A 160-amino-acid polypeptide reads, in one-letter code: Putative lipoprotein YfiB (160 aa).

Residues 1-18 form the signal peptide; that stretch reads MIKHLVAPLVFTSLILTG. The N-palmitoyl cysteine moiety is linked to residue Cys19. The S-diacylglycerol cysteine moiety is linked to residue Cys19. Residues 43–160 enclose the OmpA-like domain; that stretch reads AGDWSLGLSD…RRVAVVITTP (118 aa).

Belongs to the outer membrane OOP (TC 1.B.6) superfamily.

It localises to the cell membrane. In Escherichia coli (strain K12), this protein is Putative lipoprotein YfiB (yfiB).